Here is a 596-residue protein sequence, read N- to C-terminus: Inactive metallocarboxypeptidase ecm14 (596 aa).

Positions 1-26 (MSQSHSILSSLILLVAIIFCVPHVIA) are cleaved as a signal peptide. Positions 27-190 (VPWTTDGHAQ…SYPSMAYADA (164 aa)) are excised as a propeptide. A glycan (N-linked (GlcNAc...) asparagine) is linked at Asn114. Residues 220 to 540 (NYQPLSVIIP…NVIKYFGDFL (321 aa)) form the Peptidase M14 domain. Zn(2+)-binding residues include His285 and Glu288. Substrate-binding positions include 285–288 (HARE), Arg343, and 360–361 (DR). Residues Cys354 and Cys376 are joined by a disulfide bond. Asn400 carries an N-linked (GlcNAc...) asparagine glycan. His416 provides a ligand contact to Zn(2+). 417–418 (SY) lines the substrate pocket.

It belongs to the peptidase M14 family. It depends on Zn(2+) as a cofactor.

The protein resides in the vacuole. It localises to the secreted. Inactive carboxypeptidase that may play a role in cell wall organization and biogenesis. The protein is Inactive metallocarboxypeptidase ecm14 (ecm14) of Sclerotinia sclerotiorum (strain ATCC 18683 / 1980 / Ss-1) (White mold).